A 553-amino-acid polypeptide reads, in one-letter code: Syntaxin-binding protein 4 (553 aa).

Phosphoserine occurs at positions 10, 12, 99, and 212. Residues 19 to 105 (AFQMITIAKE…RLESAWEIAF (87 aa)) form the PDZ domain. A coiled-coil region spans residues 291–417 (SSEADEMERL…VLDCQLRKSE (127 aa)). At S463 the chain carries Phosphoserine. Residues 496-529 (DCLPYGWEEAYTADGIKYFINHVTQTTSWIHPVM) enclose the WW domain.

As to quaternary structure, interacts with STX4A. Phosphorylated on Ser-99 by PKB/AKT2 after insulin treatment. Phosphorylation on Ser-99 abolishes the interaction with STX4A.

Its subcellular location is the cytoplasm. Functionally, plays a role in the translocation of transport vesicles from the cytoplasm to the plasma membrane. Inhibits the translocation of SLC2A4 from intracellular vesicles to the plasma membrane by STX4A binding and preventing the interaction between STX4A and VAMP2. Stimulation with insulin disrupts the interaction with STX4A, leading to increased levels of SLC2A4 at the plasma membrane. May also play a role in the regulation of insulin release by pancreatic beta cells after stimulation by glucose. This is Syntaxin-binding protein 4 (STXBP4) from Homo sapiens (Human).